The following is an 895-amino-acid chain: uncharacterized protein (895 aa).

Residue 2-19 (NISVIGTGYVGLIQAVGL) participates in NAD(+) binding. Residue Cys261 is part of the active site. The DOD-type homing endonuclease domain maps to 468–614 (LIGYYLSEGW…LLILLQLLGI (147 aa)).

The protein belongs to the UDP-glucose/GDP-mannose dehydrogenase family. In terms of processing, this protein undergoes a protein self splicing that involves a post-translational excision of the intervening region (intein) followed by peptide ligation.

This is an uncharacterized protein from Methanocaldococcus jannaschii (strain ATCC 43067 / DSM 2661 / JAL-1 / JCM 10045 / NBRC 100440) (Methanococcus jannaschii).